The following is a 180-amino-acid chain: Ribosome maturation factor RimM (180 aa).

Residues 97-176 (EGEFFYCDLI…KITTNNAKTL (80 aa)) enclose the PRC barrel domain.

Belongs to the RimM family. In terms of assembly, binds ribosomal protein uS19.

The protein resides in the cytoplasm. In terms of biological role, an accessory protein needed during the final step in the assembly of 30S ribosomal subunit, possibly for assembly of the head region. Essential for efficient processing of 16S rRNA. May be needed both before and after RbfA during the maturation of 16S rRNA. It has affinity for free ribosomal 30S subunits but not for 70S ribosomes. The protein is Ribosome maturation factor RimM of Helicobacter acinonychis (strain Sheeba).